The following is a 513-amino-acid chain: Probable lipid II flippase MurJ (513 aa).

15 helical membrane-spanning segments follow: residues I3–M23, D25–F45, F83–I103, I133–A153, Y162–F182, I186–P206, I221–S241, V245–I265, L271–L291, L313–I333, I354–F374, T382–I402, F405–L425, W441–I461, and L481–L501.

The protein belongs to the MurJ/MviN family.

It is found in the cell inner membrane. The protein operates within cell wall biogenesis; peptidoglycan biosynthesis. Involved in peptidoglycan biosynthesis. Transports lipid-linked peptidoglycan precursors from the inner to the outer leaflet of the cytoplasmic membrane. In Buchnera aphidicola subsp. Baizongia pistaciae (strain Bp), this protein is Probable lipid II flippase MurJ.